The following is an 88-amino-acid chain: Small ribosomal subunit protein uS17 (88 aa).

The protein belongs to the universal ribosomal protein uS17 family. In terms of assembly, part of the 30S ribosomal subunit.

In terms of biological role, one of the primary rRNA binding proteins, it binds specifically to the 5'-end of 16S ribosomal RNA. The polypeptide is Small ribosomal subunit protein uS17 (Synechococcus sp. (strain CC9311)).